Consider the following 142-residue polypeptide: uncharacterized protein (142 aa).

Residues 1 to 22 (MSGSVNQNTDQHSQDSSSTPNN) are disordered. 2 helical membrane-spanning segments follow: residues 63-83 (LFVM…VLLV) and 109-129 (IIDG…FVDL).

The protein resides in the membrane. This is an uncharacterized protein from Acanthamoeba polyphaga mimivirus (APMV).